Consider the following 660-residue polypeptide: tRNA 5-methylaminomethyl-2-thiouridine biosynthesis bifunctional protein MnmC (660 aa).

The interval 1 to 242 (MTDRIVPATL…KRAMLVGEFA (242 aa)) is tRNA (mnm(5)s(2)U34)-methyltransferase. The segment at 266-660 (IGAGLAGCAV…VRALRHGRVA (395 aa)) is FAD-dependent cmnm(5)s(2)U34 oxidoreductase.

It in the N-terminal section; belongs to the methyltransferase superfamily. tRNA (mnm(5)s(2)U34)-methyltransferase family. The protein in the C-terminal section; belongs to the DAO family. FAD is required as a cofactor.

Its subcellular location is the cytoplasm. The catalysed reaction is 5-aminomethyl-2-thiouridine(34) in tRNA + S-adenosyl-L-methionine = 5-methylaminomethyl-2-thiouridine(34) in tRNA + S-adenosyl-L-homocysteine + H(+). Functionally, catalyzes the last two steps in the biosynthesis of 5-methylaminomethyl-2-thiouridine (mnm(5)s(2)U) at the wobble position (U34) in tRNA. Catalyzes the FAD-dependent demodification of cmnm(5)s(2)U34 to nm(5)s(2)U34, followed by the transfer of a methyl group from S-adenosyl-L-methionine to nm(5)s(2)U34, to form mnm(5)s(2)U34. In Burkholderia pseudomallei (strain 1106a), this protein is tRNA 5-methylaminomethyl-2-thiouridine biosynthesis bifunctional protein MnmC.